The primary structure comprises 706 residues: Polyribonucleotide nucleotidyltransferase (706 aa).

Asp486 and Asp492 together coordinate Mg(2+). Residues 553-612 (PRIHTIKISTDKIKDVIGKGGSVIRALTEETGTTIEIEDDGTVRIASTDGEKAKHAIRRI) form the KH domain. The region spanning 622–690 (GRVYQGKVTR…RQGRVRLSIK (69 aa)) is the S1 motif domain.

The protein belongs to the polyribonucleotide nucleotidyltransferase family. As to quaternary structure, component of the RNA degradosome, which is a multiprotein complex involved in RNA processing and mRNA degradation. The cofactor is Mg(2+).

It localises to the cytoplasm. It carries out the reaction RNA(n+1) + phosphate = RNA(n) + a ribonucleoside 5'-diphosphate. Its function is as follows. Involved in mRNA degradation. Catalyzes the phosphorolysis of single-stranded polyribonucleotides processively in the 3'- to 5'-direction. The sequence is that of Polyribonucleotide nucleotidyltransferase from Pectobacterium atrosepticum (strain SCRI 1043 / ATCC BAA-672) (Erwinia carotovora subsp. atroseptica).